A 286-amino-acid chain; its full sequence is 4-hydroxybenzoate octaprenyltransferase (286 aa).

9 helical membrane-spanning segments follow: residues 19 to 39, 42 to 62, 92 to 112, 115 to 135, 137 to 157, 161 to 181, 206 to 226, 233 to 253, and 264 to 284; these read AGWL…SHGF, WHLL…GCCV, ALVL…TTNA, IAWS…KRYV, MPQA…FAAV, VPLL…AYDT, FDVA…ALAL, AIYW…GWLI, and AFRL…LSYL.

Belongs to the UbiA prenyltransferase family. The cofactor is Mg(2+).

It is found in the cell inner membrane. It catalyses the reaction all-trans-octaprenyl diphosphate + 4-hydroxybenzoate = 4-hydroxy-3-(all-trans-octaprenyl)benzoate + diphosphate. It functions in the pathway cofactor biosynthesis; ubiquinone biosynthesis. Functionally, catalyzes the prenylation of para-hydroxybenzoate (PHB) with an all-trans polyprenyl group. Mediates the second step in the final reaction sequence of ubiquinone-8 (UQ-8) biosynthesis, which is the condensation of the polyisoprenoid side chain with PHB, generating the first membrane-bound Q intermediate 3-octaprenyl-4-hydroxybenzoate. This is 4-hydroxybenzoate octaprenyltransferase from Polaromonas sp. (strain JS666 / ATCC BAA-500).